A 247-amino-acid polypeptide reads, in one-letter code: Adenosylcobinamide-GDP ribazoletransferase (247 aa).

5 helical membrane passes run 34 to 54 (IITF…VFMV), 57 to 77 (AWCG…LMTG), 113 to 133 (GGLA…ELAL), 138 to 158 (ILAS…LLMY), and 194 to 214 (VLLL…AIFI).

It belongs to the CobS family. The cofactor is Mg(2+).

The protein localises to the cell inner membrane. It catalyses the reaction alpha-ribazole + adenosylcob(III)inamide-GDP = adenosylcob(III)alamin + GMP + H(+). The catalysed reaction is alpha-ribazole 5'-phosphate + adenosylcob(III)inamide-GDP = adenosylcob(III)alamin 5'-phosphate + GMP + H(+). It functions in the pathway cofactor biosynthesis; adenosylcobalamin biosynthesis; adenosylcobalamin from cob(II)yrinate a,c-diamide: step 7/7. Functionally, joins adenosylcobinamide-GDP and alpha-ribazole to generate adenosylcobalamin (Ado-cobalamin). Also synthesizes adenosylcobalamin 5'-phosphate from adenosylcobinamide-GDP and alpha-ribazole 5'-phosphate. This Shigella flexneri protein is Adenosylcobinamide-GDP ribazoletransferase.